The chain runs to 150 residues: Transcriptional regulator MraZ (150 aa).

SpoVT-AbrB domains are found at residues 7-55 (SHAI…PEPE) and 84-127 (AALM…SEES).

It belongs to the MraZ family. As to quaternary structure, forms oligomers.

Its subcellular location is the cytoplasm. It localises to the nucleoid. This chain is Transcriptional regulator MraZ, found in Marinobacter nauticus (strain ATCC 700491 / DSM 11845 / VT8) (Marinobacter aquaeolei).